Consider the following 406-residue polypeptide: Peptidase T (406 aa).

H78 contributes to the Zn(2+) binding site. The active site involves D80. D139 lines the Zn(2+) pocket. E173 (proton acceptor) is an active-site residue. E174, D196, and H378 together coordinate Zn(2+).

Belongs to the peptidase M20B family. The cofactor is Zn(2+).

It is found in the cytoplasm. It catalyses the reaction Release of the N-terminal residue from a tripeptide.. Functionally, cleaves the N-terminal amino acid of tripeptides. This chain is Peptidase T, found in Clostridium perfringens (strain SM101 / Type A).